Consider the following 513-residue polypeptide: Coiled-coil domain-containing protein 102B (513 aa).

Residues 1-217 (MNLDSIHRLI…IDSLKLSEEM (217 aa)) are required for centriolar localization and for interaction with CEP250, CROCC, LRRC45 and NEK2. Phosphoserine is present on residues S21, S22, S34, S135, S142, S194, and S210. The stretch at 72 to 142 (ELRLRELEEV…ELSTLKKKQS (71 aa)) forms a coiled coil. Coiled coils occupy residues 268-337 (QKIL…ESKS) and 363-513 (WDKR…LQNW). Phosphoserine is present on residues S401, S404, and S406. The disordered stretch occupies residues 493-513 (LDEEKERNENLETELRHLQNW).

As to quaternary structure, interacts (via N-terminus) with centriolar protein CEP250/CNAP1; the interaction results in recruitment of CCDC102B to the proximal ends of centrioles. Interacts (via N-terminus) with CROCC/rootletin and LRRC45. Interacts (via N-terminus) with serine/threonine-protein kinase NEK2; the interaction results in phosphorylation of CCDC102B. Post-translationally, phosphorylated directly or indirectly by NEK2 during mitosis which causes dissociation of CCDC102B from the centrosome and allows for centrosome separation.

The protein localises to the cytoplasm. It localises to the cytoskeleton. It is found in the microtubule organizing center. The protein resides in the centrosome. Its subcellular location is the centriole. Functionally, during interphase, forms fibers at the proximal ends of centrioles to maintain centrosome cohesion. During mitosis, dissociates from the centrosome following phosphorylation to allow centrosome separation. Contributes to CROCC/rootletin filament formation. This Homo sapiens (Human) protein is Coiled-coil domain-containing protein 102B (CCDC102B).